Consider the following 203-residue polypeptide: N-(5'-phosphoribosyl)anthranilate isomerase (203 aa).

This sequence belongs to the TrpF family.

The enzyme catalyses N-(5-phospho-beta-D-ribosyl)anthranilate = 1-(2-carboxyphenylamino)-1-deoxy-D-ribulose 5-phosphate. It participates in amino-acid biosynthesis; L-tryptophan biosynthesis; L-tryptophan from chorismate: step 3/5. The polypeptide is N-(5'-phosphoribosyl)anthranilate isomerase (Geobacter sulfurreducens (strain ATCC 51573 / DSM 12127 / PCA)).